We begin with the raw amino-acid sequence, 105 residues long: Translation initiation factor 1A (105 aa).

The 76-residue stretch at 12–87 folds into the S1-like domain; that stretch reads TRVRTPREEN…QKCDIIWRYT (76 aa).

This sequence belongs to the eIF-1A family.

Its function is as follows. Seems to be required for maximal rate of protein biosynthesis. Enhances ribosome dissociation into subunits and stabilizes the binding of the initiator Met-tRNA(I) to 40 S ribosomal subunits. This chain is Translation initiation factor 1A (eIF1A), found in Methanococcus aeolicus (strain ATCC BAA-1280 / DSM 17508 / OCM 812 / Nankai-3).